The following is a 189-amino-acid chain: Probable nicotinate-nucleotide adenylyltransferase (189 aa).

It belongs to the NadD family.

It carries out the reaction nicotinate beta-D-ribonucleotide + ATP + H(+) = deamido-NAD(+) + diphosphate. The protein operates within cofactor biosynthesis; NAD(+) biosynthesis; deamido-NAD(+) from nicotinate D-ribonucleotide: step 1/1. Catalyzes the reversible adenylation of nicotinate mononucleotide (NaMN) to nicotinic acid adenine dinucleotide (NaAD). This chain is Probable nicotinate-nucleotide adenylyltransferase, found in Staphylococcus aureus (strain MRSA252).